The chain runs to 1937 residues: Myosin-8 (1937 aa).

The Myosin N-terminal SH3-like domain occupies 35–84 (DAKTSVFVAEPKESYVKSTIQSKEGGKVTVKTEGGATLTVREDQVFPMNP). T66 and T71 each carry phosphothreonine. Positions 88-781 (DKIEDMAMMT…LLGLLEEMRD (694 aa)) constitute a Myosin motor domain. K132 is subject to N6,N6,N6-trimethyllysine. 181 to 188 (GESGAGKT) serves as a coordination point for ATP. Y389 bears the Phosphotyrosine mark. S392 carries the phosphoserine modification. T419 is subject to Phosphothreonine. Residue Y424 is modified to Phosphotyrosine. Residue S625 is modified to Phosphoserine. The actin-binding stretch occupies residues 658–680 (LNKLMTNLRSTHPHFVRCIIPNE). At H756 the chain carries Pros-methylhistidine. Residues 760 to 774 (KFGHTKVFFKAGLLG) are actin-binding. One can recognise an IQ domain in the interval 781–813 (DEKLAQIITRTQAVCRGFLMRVEYQKMLQRREA). Residues 842–1937 (LLKSAETEKE…REVHTKISAE (1096 aa)) are a coiled coil. Phosphoserine occurs at positions 1091 and 1095. The disordered stretch occupies residues 1126–1146 (EAERASRAKAEKQRSDLSREL). Positions 1127–1146 (AERASRAKAEKQRSDLSREL) are enriched in basic and acidic residues. S1161, S1236, S1242, and S1260 each carry phosphoserine. 2 positions are modified to phosphothreonine: T1264 and T1285. Phosphoserine occurs at positions 1291, 1302, and 1305. Y1463 carries the phosphotyrosine modification. Residue T1466 is modified to Phosphothreonine. At S1473 the chain carries Phosphoserine. A Phosphotyrosine modification is found at Y1491. S1494 carries the phosphoserine modification. At T1500 the chain carries Phosphothreonine. Residue S1513 is modified to Phosphoserine. T1516 is subject to Phosphothreonine. S1553, S1573, S1602, S1713, and S1725 each carry phosphoserine. T1729 is modified (phosphothreonine). S1738 carries the post-translational modification Phosphoserine.

This sequence belongs to the TRAFAC class myosin-kinesin ATPase superfamily. Myosin family. Muscle myosin is a hexameric protein that consists of 2 heavy chain subunits (MHC), 2 alkali light chain subunits (MLC) and 2 regulatory light chain subunits (MLC-2).

The protein resides in the cytoplasm. Its subcellular location is the myofibril. Its function is as follows. Muscle contraction. The protein is Myosin-8 (MYH8) of Homo sapiens (Human).